The following is a 683-amino-acid chain: Long-chain-fatty-acid--CoA ligase 5 (683 aa).

The chain crosses the membrane as a helical; Signal-anchor for type III membrane protein span at residues 12–32 (LPTPALICILTFGAAIFLWLI). The residue at position 32 (I32) is a Phosphoserine. The Cytoplasmic portion of the chain corresponds to 33–683 (TRPQPVLPLL…IDSLYEHIQD (651 aa)). K361 carries the post-translational modification N6-acetyllysine.

This sequence belongs to the ATP-dependent AMP-binding enzyme family. The cofactor is Mg(2+).

Its subcellular location is the mitochondrion. The protein resides in the endoplasmic reticulum. The protein localises to the mitochondrion outer membrane. It is found in the endoplasmic reticulum membrane. It localises to the cell membrane. The enzyme catalyses a long-chain fatty acid + ATP + CoA = a long-chain fatty acyl-CoA + AMP + diphosphate. It catalyses the reaction (5Z,8Z,11Z,14Z)-eicosatetraenoate + ATP + CoA = (5Z,8Z,11Z,14Z)-eicosatetraenoyl-CoA + AMP + diphosphate. It carries out the reaction hexadecanoate + ATP + CoA = hexadecanoyl-CoA + AMP + diphosphate. The catalysed reaction is (E)-hexadec-2-enoate + ATP + CoA = (2E)-hexadecenoyl-CoA + AMP + diphosphate. The enzyme catalyses 15-hydroxy-(5Z,8Z,11Z,13E)-eicosatetraenoate + ATP + CoA = 15-hydroxy-(5Z,8Z,11Z,13E)-eicosatetraenoyl-CoA + AMP + diphosphate. It catalyses the reaction 12-hydroxy-(5Z,8Z,10E,14Z)-eicosatetraenoate + ATP + CoA = 12-hydroxy-(5Z,8Z,10E,14Z)-eicosatetraenoyl-CoA + AMP + diphosphate. It carries out the reaction 5-hydroxy-(6E,8Z,11Z,14Z)-eicosatetraenoate + ATP + CoA = 5-hydroxy-(6E,8Z,11Z,14Z)-eicosatetraenoyl-CoA + AMP + diphosphate. The catalysed reaction is 14,15-epoxy-(5Z,8Z,11Z)-eicosatrienoate + ATP + CoA = 14,15-epoxy-(5Z,8Z,11Z)-eicosatrienoyl-CoA + AMP + diphosphate. The enzyme catalyses 11,12-epoxy-(5Z,8Z,14Z)-eicosatrienoate + ATP + CoA = 11,12-epoxy-(5Z,8Z,14Z)-eicosatrienoyl-CoA + AMP + diphosphate. It catalyses the reaction (9Z)-octadecenoate + ATP + CoA = (9Z)-octadecenoyl-CoA + AMP + diphosphate. Catalyzes the conversion of long-chain fatty acids to their active form acyl-CoAs for both synthesis of cellular lipids, and degradation via beta-oxidation. ACSL5 may activate fatty acids from exogenous sources for the synthesis of triacylglycerol destined for intracellular storage. Utilizes a wide range of saturated fatty acids with a preference for C16-C18 unsaturated fatty acids. It was suggested that it may also stimulate fatty acid oxidation. At the villus tip of the crypt-villus axis of the small intestine may sensitize epithelial cells to apoptosis specifically triggered by the death ligand TRAIL. May have a role in the survival of glioma cells. This chain is Long-chain-fatty-acid--CoA ligase 5, found in Homo sapiens (Human).